Consider the following 150-residue polypeptide: MENKPKPSRILGIDFGMSRIGLAQSDERKIIAMPLITVHTEKKSEQTVIKLLETISQLCETQKCEIEEIVIGLPLMMSGRTGFLADEVKHFAQLLQQLTPIPIRLWDERLTTVQAERSLRESQLTRKKRSKVVDIVSASIILQSYLDSRC.

It belongs to the YqgF nuclease family.

Its subcellular location is the cytoplasm. Could be a nuclease involved in processing of the 5'-end of pre-16S rRNA. The chain is Putative pre-16S rRNA nuclease from Protochlamydia amoebophila (strain UWE25).